Reading from the N-terminus, the 150-residue chain is Large ribosomal subunit protein uL13 (150 aa).

This sequence belongs to the universal ribosomal protein uL13 family. As to quaternary structure, part of the 50S ribosomal subunit.

Functionally, this protein is one of the early assembly proteins of the 50S ribosomal subunit, although it is not seen to bind rRNA by itself. It is important during the early stages of 50S assembly. The protein is Large ribosomal subunit protein uL13 of Chlamydia abortus (strain DSM 27085 / S26/3) (Chlamydophila abortus).